The following is a 394-amino-acid chain: Tyrosine--tRNA ligase, cytoplasmic (394 aa).

N-acetylserine is present on S2. Y43 lines the L-tyrosine pocket. The 'HIGH' region signature appears at 48 to 56 (PTGRPHCGY). Residues Y170, Q174, D177, and Q192 each contribute to the L-tyrosine site. The 'KMSKS' region motif lies at 227–231 (KMSAS). S235 is modified (phosphoserine). The disordered stretch occupies residues 348–394 (QEASEKGYPVATPQKSKKAKKPKNKGTKYPGATKTNEIATKLEETKL). T359 is modified (phosphothreonine). A Nuclear localization signal motif is present at residues 360-378 (PQKSKKAKKPKNKGTKYPG). Residues 362–373 (KSKKAKKPKNKG) show a composition bias toward basic residues.

This sequence belongs to the class-I aminoacyl-tRNA synthetase family. Homodimer. Interacts with KNR4/SMI1.

The protein localises to the cytoplasm. The protein resides in the nucleus. It carries out the reaction tRNA(Tyr) + L-tyrosine + ATP = L-tyrosyl-tRNA(Tyr) + AMP + diphosphate + H(+). Its activity is regulated as follows. Inhibited by N-ethylmaleimide and p-chloromercuribenzoate. Its function is as follows. Catalyzes the attachment of L-tyrosine to tRNA(Tyr) in a two-step reaction: L-tyrosine is first activated by ATP to form Tyr-AMP and then transferred to the acceptor end of tRNA(Tyr). The specificity determinants on tRNA(Tyr) are the base pair C1-G72, the discriminator residue A73, and the three anticodon bases G34, U35 and A36. Also involved in nuclear tRNA export. Also attaches D-Tyr to tRNA(Tyr), this reaction is about 150-fold less efficient than attachment of L-Tyr. The protein is Tyrosine--tRNA ligase, cytoplasmic of Saccharomyces cerevisiae (strain ATCC 204508 / S288c) (Baker's yeast).